Reading from the N-terminus, the 273-residue chain is Anthocyanin regulatory C1 protein (273 aa).

HTH myb-type domains lie at 9–65 and 66–116; these read KEGV…RPNI and RRGN…GRRA. DNA-binding regions (H-T-H motif) lie at residues 37 to 61 and 89 to 112; these read WREVPQKAGLRRCGKSCRLRWLNYL and WSLIAGRLPGRTDNEIKNYWNSTL. 2 disordered regions span residues 137–164 and 196–220; these read ATPAATSGACETGQNSAAHRADPDSAGT and AGETATPMAGGGGGGGGEAGSSDDC. Residues 204 to 214 are compositionally biased toward gly residues; sequence AGGGGGGGGEA.

Its subcellular location is the nucleus. In terms of biological role, controls the expression of genes involved in anthocyanin biosynthesis. Regulates the expression of at least 3 structural genes: chalcone synthase, dihydroflavonol reductase and flavonol O(3) glucosyltransferase. C1 acts as a trans-acting factor. The polypeptide is Anthocyanin regulatory C1 protein (C1) (Zea mays (Maize)).